We begin with the raw amino-acid sequence, 120 residues long: Large ribosomal subunit protein uL18 (120 aa).

The protein belongs to the universal ribosomal protein uL18 family. Part of the 50S ribosomal subunit; part of the 5S rRNA/L5/L18/L25 subcomplex. Contacts the 5S and 23S rRNAs.

Its function is as follows. This is one of the proteins that bind and probably mediate the attachment of the 5S RNA into the large ribosomal subunit, where it forms part of the central protuberance. This is Large ribosomal subunit protein uL18 from Geobacillus kaustophilus (strain HTA426).